The sequence spans 844 residues: Protein translocase subunit SecA (844 aa).

ATP contacts are provided by residues Gln-89, 107 to 111, and Asp-497; that span reads GEGKT. Cys-829, Cys-831, Cys-840, and His-841 together coordinate Zn(2+).

Belongs to the SecA family. Monomer and homodimer. Part of the essential Sec protein translocation apparatus which comprises SecA, SecYEG and auxiliary proteins SecDF. Other proteins may also be involved. Zn(2+) serves as cofactor.

The protein resides in the cell membrane. It localises to the cytoplasm. The catalysed reaction is ATP + H2O + cellular proteinSide 1 = ADP + phosphate + cellular proteinSide 2.. In terms of biological role, part of the Sec protein translocase complex. Interacts with the SecYEG preprotein conducting channel. Has a central role in coupling the hydrolysis of ATP to the transfer of proteins into and across the cell membrane, serving as an ATP-driven molecular motor driving the stepwise translocation of polypeptide chains across the membrane. This chain is Protein translocase subunit SecA, found in Streptococcus suis (strain 98HAH33).